The chain runs to 261 residues: tRNA pseudouridine synthase A (261 aa).

The active-site Nucleophile is the aspartate 51. Position 109 (tyrosine 109) interacts with substrate.

The protein belongs to the tRNA pseudouridine synthase TruA family. In terms of assembly, homodimer.

It catalyses the reaction uridine(38/39/40) in tRNA = pseudouridine(38/39/40) in tRNA. Its function is as follows. Formation of pseudouridine at positions 38, 39 and 40 in the anticodon stem and loop of transfer RNAs. In Shewanella baltica (strain OS195), this protein is tRNA pseudouridine synthase A.